The following is a 431-amino-acid chain: Adenylosuccinate synthetase (431 aa).

Residues 12–18 (GDEGKGK) and 40–42 (GHT) each bind GTP. The active-site Proton acceptor is D13. Mg(2+) contacts are provided by D13 and G40. Residues 13–16 (DEGK), 38–41 (NAGH), T129, R143, Q224, T239, and R303 contribute to the IMP site. The active-site Proton donor is H41. Substrate is bound at residue 299–305 (TVSNRQR). Residues R305, 331–333 (KLD), and 413–415 (STG) each bind GTP.

It belongs to the adenylosuccinate synthetase family. As to quaternary structure, homodimer. Mg(2+) serves as cofactor.

The protein localises to the cytoplasm. The enzyme catalyses IMP + L-aspartate + GTP = N(6)-(1,2-dicarboxyethyl)-AMP + GDP + phosphate + 2 H(+). Its pathway is purine metabolism; AMP biosynthesis via de novo pathway; AMP from IMP: step 1/2. Its function is as follows. Plays an important role in the de novo pathway of purine nucleotide biosynthesis. Catalyzes the first committed step in the biosynthesis of AMP from IMP. The protein is Adenylosuccinate synthetase of Ehrlichia canis (strain Jake).